The chain runs to 163 residues: 2-C-methyl-D-erythritol 2,4-cyclodiphosphate synthase (163 aa).

A divalent metal cation contacts are provided by D12 and H14. Residues 12 to 14 and 38 to 39 each bind 4-CDP-2-C-methyl-D-erythritol 2-phosphate; these read DVH and HS. H46 is a binding site for a divalent metal cation. Residues 60-62, 136-139, F143, and R146 contribute to the 4-CDP-2-C-methyl-D-erythritol 2-phosphate site; these read DIG and TTSE.

The protein belongs to the IspF family. Homotrimer. It depends on a divalent metal cation as a cofactor.

It catalyses the reaction 4-CDP-2-C-methyl-D-erythritol 2-phosphate = 2-C-methyl-D-erythritol 2,4-cyclic diphosphate + CMP. It functions in the pathway isoprenoid biosynthesis; isopentenyl diphosphate biosynthesis via DXP pathway; isopentenyl diphosphate from 1-deoxy-D-xylulose 5-phosphate: step 4/6. In terms of biological role, involved in the biosynthesis of isopentenyl diphosphate (IPP) and dimethylallyl diphosphate (DMAPP), two major building blocks of isoprenoid compounds. Catalyzes the conversion of 4-diphosphocytidyl-2-C-methyl-D-erythritol 2-phosphate (CDP-ME2P) to 2-C-methyl-D-erythritol 2,4-cyclodiphosphate (ME-CPP) with a corresponding release of cytidine 5-monophosphate (CMP). This is 2-C-methyl-D-erythritol 2,4-cyclodiphosphate synthase from Xanthomonas campestris pv. campestris (strain 8004).